The following is a 211-amino-acid chain: HTH-type transcriptional repressor FabR (211 aa).

The region spanning 10-70 is the HTH tetR-type domain; it reads RTRRSLIEAA…TMVDESGLML (61 aa). A DNA-binding region (H-T-H motif) is located at residues 33-52; that stretch reads SLREVSREAGIAPTSFYRHF.

In terms of assembly, homodimer.

It localises to the cytoplasm. Represses the transcription of fabB, involved in unsaturated fatty acid (UFA) biosynthesis. By controlling UFA production, FabR directly influences the physical properties of the membrane bilayer. The protein is HTH-type transcriptional repressor FabR of Yersinia pseudotuberculosis serotype O:1b (strain IP 31758).